Here is a 251-residue protein sequence, read N- to C-terminus: 5'-nucleotidase SurE (251 aa).

The a divalent metal cation site is built by aspartate 8, aspartate 9, serine 39, and asparagine 91.

It belongs to the SurE nucleotidase family. The cofactor is a divalent metal cation.

The protein localises to the cytoplasm. The catalysed reaction is a ribonucleoside 5'-phosphate + H2O = a ribonucleoside + phosphate. Nucleotidase that shows phosphatase activity on nucleoside 5'-monophosphates. This chain is 5'-nucleotidase SurE, found in Methylococcus capsulatus (strain ATCC 33009 / NCIMB 11132 / Bath).